A 352-amino-acid chain; its full sequence is Holliday junction branch migration complex subunit RuvB (352 aa).

A large ATPase domain (RuvB-L) region spans residues 13–201 (FSFRKKELRL…FGISQKIEFY (189 aa)). ATP-binding positions include Arg-41, Gly-82, Lys-85, Thr-86, Thr-87, 148–150 (EDF), Arg-191, Tyr-201, and Arg-238. Residue Thr-86 participates in Mg(2+) binding. The small ATPAse domain (RuvB-S) stretch occupies residues 202–273 (TCDELKQIIV…LIKKALNSYQ (72 aa)). The interval 276 to 352 (EKGLDSLDRH…KYIDSKDDNF (77 aa)) is head domain (RuvB-H). Residues Arg-330 and Arg-335 each coordinate DNA.

This sequence belongs to the RuvB family. As to quaternary structure, homohexamer. Forms an RuvA(8)-RuvB(12)-Holliday junction (HJ) complex. HJ DNA is sandwiched between 2 RuvA tetramers; dsDNA enters through RuvA and exits via RuvB. An RuvB hexamer assembles on each DNA strand where it exits the tetramer. Each RuvB hexamer is contacted by two RuvA subunits (via domain III) on 2 adjacent RuvB subunits; this complex drives branch migration. In the full resolvosome a probable DNA-RuvA(4)-RuvB(12)-RuvC(2) complex forms which resolves the HJ.

Its subcellular location is the cytoplasm. The enzyme catalyses ATP + H2O = ADP + phosphate + H(+). The RuvA-RuvB-RuvC complex processes Holliday junction (HJ) DNA during genetic recombination and DNA repair, while the RuvA-RuvB complex plays an important role in the rescue of blocked DNA replication forks via replication fork reversal (RFR). RuvA specifically binds to HJ cruciform DNA, conferring on it an open structure. The RuvB hexamer acts as an ATP-dependent pump, pulling dsDNA into and through the RuvAB complex. RuvB forms 2 homohexamers on either side of HJ DNA bound by 1 or 2 RuvA tetramers; 4 subunits per hexamer contact DNA at a time. Coordinated motions by a converter formed by DNA-disengaged RuvB subunits stimulates ATP hydrolysis and nucleotide exchange. Immobilization of the converter enables RuvB to convert the ATP-contained energy into a lever motion, pulling 2 nucleotides of DNA out of the RuvA tetramer per ATP hydrolyzed, thus driving DNA branch migration. The RuvB motors rotate together with the DNA substrate, which together with the progressing nucleotide cycle form the mechanistic basis for DNA recombination by continuous HJ branch migration. Branch migration allows RuvC to scan DNA until it finds its consensus sequence, where it cleaves and resolves cruciform DNA. The sequence is that of Holliday junction branch migration complex subunit RuvB from Prochlorococcus marinus (strain AS9601).